A 428-amino-acid chain; its full sequence is Cytochrome c biogenesis protein CcsB (428 aa).

Transmembrane regions (helical) follow at residues 14-34, 72-92, and 162-182; these read LRFAISLIIFIAITSGIGTFI, SIWFLFTLILLCISLSACSFR, and IGPLVVHIGLIVLLLGSAYGS.

The protein belongs to the Ccs1/CcsB family. In terms of assembly, may interact with CcsA.

The protein resides in the cellular thylakoid membrane. Required during biogenesis of c-type cytochromes (cytochrome c6 and cytochrome f) at the step of heme attachment. In Prochlorococcus marinus (strain MIT 9312), this protein is Cytochrome c biogenesis protein CcsB.